The chain runs to 203 residues: DNA-directed RNA polymerase subunit gamma (203 aa).

Residues Cys34, Cys36, Cys49, and Cys52 each contribute to the Zn(2+) site.

Belongs to the RNA polymerase beta' chain family. RpoC1 subfamily. In terms of assembly, in cyanobacteria the RNAP catalytic core is composed of 2 alpha, 1 beta, 1 beta', 1 gamma and 1 omega subunit. When a sigma factor is associated with the core the holoenzyme is formed, which can initiate transcription. The cofactor is Zn(2+).

It carries out the reaction RNA(n) + a ribonucleoside 5'-triphosphate = RNA(n+1) + diphosphate. DNA-dependent RNA polymerase catalyzes the transcription of DNA into RNA using the four ribonucleoside triphosphates as substrates. This is DNA-directed RNA polymerase subunit gamma (rpoC1) from Prochlorothrix hollandica.